Here is a 359-residue protein sequence, read N- to C-terminus: Lactosylceramide 4-alpha-galactosyltransferase (359 aa).

Residues 1–30 (MGISCSHLEETMSKPPDCLLRMLRGTPRQR) are Cytoplasmic-facing. Residues 31–51 (VFTFFIISFKFMFLISILIYW) form a helical; Signal-anchor for type II membrane protein membrane-spanning segment. Topologically, residues 52–359 (HTVGAPKDQR…TTHRAMKMYL (308 aa)) are lumenal. The DXD motif motif lies at 198–200 (DTD). N-linked (GlcNAc...) asparagine glycans are attached at residues asparagine 209 and asparagine 315.

Belongs to the glycosyltransferase 32 family.

Its subcellular location is the golgi apparatus membrane. The enzyme catalyses a beta-D-Gal-(1-&gt;4)-beta-D-Glc-(1&lt;-&gt;1)-Cer(d18:1(4E)) + UDP-alpha-D-galactose = a globoside Gb3Cer (d18:1(4E)) + UDP + H(+). The catalysed reaction is a beta-D-Gal-(1&lt;-&gt;1')-ceramide + UDP-alpha-D-galactose = alpha-D-Gal-(1-&gt;4)-beta-D-Gal-(1&lt;-&gt;1')-Cer + UDP + H(+). It participates in glycolipid biosynthesis. Its function is as follows. Catalyzes the transfer of galactose from UDP-alpha-D-galactose to lactosylceramide/beta-D-galactosyl-(1-&gt;4)-beta-D-glucosyl-(1&lt;-&gt;1)-ceramide(d18:1(4E)) to produce globotriaosylceramide/globoside Gb3Cer (d18:1(4E)). Also able to transfer galactose to galactosylceramide/beta-D-Gal-(1&lt;-&gt;1')-Cer. Globoside Gb3Cer is a glycosphingolipid of the globo serie, one of the major types of neutral root structures of glycosphingolipids, that constitute a significant portion of mammalian cell membranes. The sequence is that of Lactosylceramide 4-alpha-galactosyltransferase from Mus musculus (Mouse).